The primary structure comprises 681 residues: Minichromosome maintenance domain-containing protein 2 (681 aa).

Ser-292 carries the post-translational modification Phosphoserine. Residues 533–621 (KQFTTEDFEK…LIAALLFEIS (89 aa)) form the MCM domain.

Plays an important role in meiotic recombination and associated DNA double-strand break repair. The polypeptide is Minichromosome maintenance domain-containing protein 2 (Mcmdc2) (Rattus norvegicus (Rat)).